Consider the following 440-residue polypeptide: Histidinol dehydrogenase (440 aa).

Positions 134, 196, and 219 each coordinate NAD(+). 3 residues coordinate substrate: S242, Q264, and H267. Zn(2+) contacts are provided by Q264 and H267. Residues E332 and H333 each act as proton acceptor in the active site. 4 residues coordinate substrate: H333, D366, E420, and H425. D366 is a Zn(2+) binding site. H425 lines the Zn(2+) pocket.

This sequence belongs to the histidinol dehydrogenase family. Zn(2+) serves as cofactor.

It catalyses the reaction L-histidinol + 2 NAD(+) + H2O = L-histidine + 2 NADH + 3 H(+). It participates in amino-acid biosynthesis; L-histidine biosynthesis; L-histidine from 5-phospho-alpha-D-ribose 1-diphosphate: step 9/9. Functionally, catalyzes the sequential NAD-dependent oxidations of L-histidinol to L-histidinaldehyde and then to L-histidine. The chain is Histidinol dehydrogenase from Prochlorococcus marinus (strain SARG / CCMP1375 / SS120).